We begin with the raw amino-acid sequence, 110 residues long: MAAWGPAAAAPLLRGSRGLPLWHCAQRMFASQTEGELKVTQVLKEKFPRATAIQVTDISGGCGAMYEIKIESEEFKEKRTVQQHQMVNQALKEEIKGMHGLRIFTSVPKC.

Belongs to the BolA/IbaG family. In terms of assembly, interacts with NFU1.

The protein localises to the mitochondrion. Acts as a mitochondrial iron-sulfur (Fe-S) cluster assembly factor that facilitates (Fe-S) cluster insertion into a subset of mitochondrial proteins. Probably acts together with NFU1. The protein is BolA-like protein 3 (Bola3) of Mus musculus (Mouse).